A 491-amino-acid chain; its full sequence is Chromosomal replication initiator protein DnaA (491 aa).

The interval 1 to 69 is domain I, interacts with DnaA modulators; that stretch reads MTTWDKCLKK…TIQECHGNDL (69 aa). Residues 69–154 are domain II; that stretch reads LIIEYSNKKF…KEDEEYSFGL (86 aa). Residues 155-371 form a domain III, AAA+ region region; it reads PLKEKYVFDS…GALNRVLTTS (217 aa). Positions 199, 201, 202, and 203 each coordinate ATP. The domain IV, binds dsDNA stretch occupies residues 372–491; it reads KFNHKDPTIE…YELLLDKISR (120 aa).

This sequence belongs to the DnaA family. As to quaternary structure, oligomerizes as a right-handed, spiral filament on DNA at oriC.

Its subcellular location is the cytoplasm. Plays an essential role in the initiation and regulation of chromosomal replication. ATP-DnaA binds to the origin of replication (oriC) to initiate formation of the DNA replication initiation complex once per cell cycle. Binds the DnaA box (a 9 base pair repeat at the origin) and separates the double-stranded (ds)DNA. Forms a right-handed helical filament on oriC DNA; dsDNA binds to the exterior of the filament while single-stranded (ss)DNA is stabiized in the filament's interior. The ATP-DnaA-oriC complex binds and stabilizes one strand of the AT-rich DNA unwinding element (DUE), permitting loading of DNA polymerase. After initiation quickly degrades to an ADP-DnaA complex that is not apt for DNA replication. Binds acidic phospholipids. This is Chromosomal replication initiator protein DnaA from Francisella tularensis subsp. holarctica (strain FTNF002-00 / FTA).